We begin with the raw amino-acid sequence, 266 residues long: Glutamate racemase (266 aa).

Substrate contacts are provided by residues Asp-9 to Ser-10 and Tyr-41 to Gly-42. The Proton donor/acceptor role is filled by Cys-72. Residue Asn-73–Thr-74 coordinates substrate. Cys-184 functions as the Proton donor/acceptor in the catalytic mechanism. Thr-185 to His-186 serves as a coordination point for substrate.

It belongs to the aspartate/glutamate racemases family.

It catalyses the reaction L-glutamate = D-glutamate. It participates in cell wall biogenesis; peptidoglycan biosynthesis. Its function is as follows. Provides the (R)-glutamate required for cell wall biosynthesis. This chain is Glutamate racemase, found in Staphylococcus aureus (strain bovine RF122 / ET3-1).